A 577-amino-acid polypeptide reads, in one-letter code: Sulfite reductase [NADPH] hemoprotein beta-component 2 (577 aa).

4 residues coordinate [4Fe-4S] cluster: cysteine 441, cysteine 447, cysteine 486, and cysteine 490. Residue cysteine 490 coordinates siroheme.

This sequence belongs to the nitrite and sulfite reductase 4Fe-4S domain family. Alpha(8)-beta(8). The alpha component is a flavoprotein, the beta component is a hemoprotein. The cofactor is siroheme. It depends on [4Fe-4S] cluster as a cofactor.

It carries out the reaction hydrogen sulfide + 3 NADP(+) + 3 H2O = sulfite + 3 NADPH + 4 H(+). The protein operates within sulfur metabolism; hydrogen sulfide biosynthesis; hydrogen sulfide from sulfite (NADPH route): step 1/1. Component of the sulfite reductase complex that catalyzes the 6-electron reduction of sulfite to sulfide. This is one of several activities required for the biosynthesis of L-cysteine from sulfate. The sequence is that of Sulfite reductase [NADPH] hemoprotein beta-component 2 from Pectobacterium carotovorum subsp. carotovorum (strain PC1).